Reading from the N-terminus, the 393-residue chain is S-adenosylmethionine synthase 1 (393 aa).

Residue glutamate 9 coordinates Mg(2+). Position 15 (histidine 15) interacts with ATP. Glutamate 43 serves as a coordination point for K(+). L-methionine contacts are provided by glutamate 56 and glutamine 99. Residues 167–169 (DGK), 235–238 (SGRF), aspartate 246, 252–253 (RK), alanine 269, lysine 273, and lysine 277 each bind ATP. An L-methionine-binding site is contributed by aspartate 246. Lysine 277 serves as a coordination point for L-methionine.

This sequence belongs to the AdoMet synthase family. As to quaternary structure, homotetramer. Mn(2+) serves as cofactor. Requires Mg(2+) as cofactor. It depends on Co(2+) as a cofactor. K(+) is required as a cofactor.

The protein localises to the cytoplasm. It carries out the reaction L-methionine + ATP + H2O = S-adenosyl-L-methionine + phosphate + diphosphate. The protein operates within amino-acid biosynthesis; S-adenosyl-L-methionine biosynthesis; S-adenosyl-L-methionine from L-methionine: step 1/1. Its function is as follows. Catalyzes the formation of S-adenosylmethionine from methionine and ATP. The reaction comprises two steps that are both catalyzed by the same enzyme: formation of S-adenosylmethionine (AdoMet) and triphosphate, and subsequent hydrolysis of the triphosphate. The sequence is that of S-adenosylmethionine synthase 1 (SAMS1) from Brassica juncea (Indian mustard).